We begin with the raw amino-acid sequence, 214 residues long: External core antigen (214 aa).

The first 19 residues, 1-19 (MQLFHLCLIISCTCPTLQA), serve as a signal peptide directing secretion. An HBEAG region spans residues 25–27 (GWL). Residues 164–214 (PNAPILSTLPETTVVRRRDRGRSPRRRTPSPRRRRSQSPRRRRSQSRESQC) form a disordered region. The segment covering 178–207 (VRRRDRGRSPRRRTPSPRRRRSQSPRRRRS) has biased composition (basic residues). A 1; half-length repeat occupies 186-192 (SPRRRTP). Residues 186-208 (SPRRRTPSPRRRRSQSPRRRRSQ) form a 3 X 8 AA repeats of S-P-R-R-R-R-S-Q region. Positions 186–214 (SPRRRTPSPRRRRSQSPRRRRSQSRESQC) are excised as a propeptide. Repeat copies occupy residues 193 to 200 (SPRRRRSQ) and 201 to 208 (SPRRRRSQ).

The protein belongs to the orthohepadnavirus precore antigen family. As to quaternary structure, homodimerizes. In terms of processing, phosphorylated. Post-translationally, cleaved by host furin.

The protein resides in the secreted. The protein localises to the host nucleus. Its function is as follows. May regulate immune response to the intracellular capsid in acting as a T-cell tolerogen, by having an immunoregulatory effect which prevents destruction of infected cells by cytotoxic T-cells. This immune regulation may predispose to chronicity during perinatal infections and prevent severe liver injury during adult infections. This chain is External core antigen, found in Homo sapiens (Human).